We begin with the raw amino-acid sequence, 464 residues long: Glutamyl-tRNA reductase (464 aa).

Substrate is bound by residues Thr47–Arg50, Ser145, Glu150–Gln152, and Gln156. The active-site Nucleophile is the Cys48. Ala225–Asn230 provides a ligand contact to NADP(+).

It belongs to the glutamyl-tRNA reductase family. Homodimer.

The enzyme catalyses (S)-4-amino-5-oxopentanoate + tRNA(Glu) + NADP(+) = L-glutamyl-tRNA(Glu) + NADPH + H(+). It participates in porphyrin-containing compound metabolism; protoporphyrin-IX biosynthesis; 5-aminolevulinate from L-glutamyl-tRNA(Glu): step 1/2. Its function is as follows. Catalyzes the NADPH-dependent reduction of glutamyl-tRNA(Glu) to glutamate 1-semialdehyde (GSA). This is Glutamyl-tRNA reductase from Psychrobacter cryohalolentis (strain ATCC BAA-1226 / DSM 17306 / VKM B-2378 / K5).